The following is a 41-amino-acid chain: Large ribosomal subunit protein bL36 (41 aa).

Belongs to the bacterial ribosomal protein bL36 family.

The protein is Large ribosomal subunit protein bL36 of Erythrobacter litoralis (strain HTCC2594).